The chain runs to 381 residues: Spermidine/putrescine import ATP-binding protein PotA (381 aa).

Residues 19 to 249 (VELRKVFKVF…PESPFVADFI (231 aa)) enclose the ABC transporter domain. 51 to 58 (GPSGCGKT) lines the ATP pocket.

This sequence belongs to the ABC transporter superfamily. Spermidine/putrescine importer (TC 3.A.1.11.1) family. As to quaternary structure, the complex is composed of two ATP-binding proteins (PotA), two transmembrane proteins (PotB and PotC) and a solute-binding protein (PotD).

Its subcellular location is the cell inner membrane. It catalyses the reaction ATP + H2O + polyamine-[polyamine-binding protein]Side 1 = ADP + phosphate + polyamineSide 2 + [polyamine-binding protein]Side 1.. Part of the ABC transporter complex PotABCD involved in spermidine/putrescine import. Responsible for energy coupling to the transport system. This chain is Spermidine/putrescine import ATP-binding protein PotA, found in Trichodesmium erythraeum (strain IMS101).